Here is a 594-residue protein sequence, read N- to C-terminus: Sodium-dependent glucose transporter 1 (594 aa).

A run of 11 helical transmembrane segments spans residues Trp77–Leu97, Leu115–Phe137, Leu144–Pro161, Ala166–Gly186, Ala205–Phe225, Ile269–Ile289, Thr311–Gly331, Ala349–Ala371, Leu393–Ile413, Ile439–Leu459, and Leu467–Tyr487.

The protein belongs to the major facilitator superfamily.

The protein resides in the apical cell membrane. In terms of biological role, may function as a sodium-dependent glucose transporter. Potential channels for urea in the inner medulla of kidney. This Danio rerio (Zebrafish) protein is Sodium-dependent glucose transporter 1 (mfsd4b).